The primary structure comprises 657 residues: DNA ligase (657 aa).

80-81 provides a ligand contact to NAD(+); it reads SL. K104 acts as the N6-AMP-lysine intermediate in catalysis. NAD(+) is bound by residues R125, E159, and K297. Residues C386, C389, C406, and C411 each coordinate Zn(2+). In terms of domain architecture, BRCT spans 571–657; sequence QSEQIFENLN…EWLNNGVRPE (87 aa).

It belongs to the NAD-dependent DNA ligase family. LigA subfamily. The cofactor is Mg(2+). Requires Mn(2+) as cofactor.

It carries out the reaction NAD(+) + (deoxyribonucleotide)n-3'-hydroxyl + 5'-phospho-(deoxyribonucleotide)m = (deoxyribonucleotide)n+m + AMP + beta-nicotinamide D-nucleotide.. In terms of biological role, DNA ligase that catalyzes the formation of phosphodiester linkages between 5'-phosphoryl and 3'-hydroxyl groups in double-stranded DNA using NAD as a coenzyme and as the energy source for the reaction. It is essential for DNA replication and repair of damaged DNA. In Ruminiclostridium cellulolyticum (strain ATCC 35319 / DSM 5812 / JCM 6584 / H10) (Clostridium cellulolyticum), this protein is DNA ligase.